A 54-amino-acid chain; its full sequence is Protein PIGBOS1 (54 aa).

The Mitochondrial intermembrane portion of the chain corresponds to 1-4 (MFRR). The helical transmembrane segment at 5-25 (LTFAQLLFATVLGIAGGVYIF) threads the bilayer. Residues 26–54 (QPVFEQYAKDQKELKEKMQLVQESEEKKS) are Cytoplasmic-facing. The required for interaction with CLCC1 stretch occupies residues 30 to 36 (EQYAKDQ).

In terms of assembly, homooligomer. Interacts (via C-terminus) with endoplasmic reticulum (ER) protein CLCC1; the interaction occurs at the mitochondria-associated ER membrane, a zone of contact between the ER and mitochondrial membranes, but does not appear to play a role in ER-mitochondria tethering and is not affected by ER stress.

It is found in the mitochondrion outer membrane. Plays a role in regulation of the unfolded protein response triggered by endoplasmic reticulum (ER) stress resulting from the presence of unfolded proteins in the ER lumen. This is Protein PIGBOS1 from Homo sapiens (Human).